The following is a 307-amino-acid chain: Ribosomal RNA small subunit methyltransferase H (307 aa).

S-adenosyl-L-methionine contacts are provided by residues 33 to 35 (GGH), aspartate 52, leucine 83, aspartate 97, and glutamine 104.

Belongs to the methyltransferase superfamily. RsmH family.

It is found in the cytoplasm. The catalysed reaction is cytidine(1402) in 16S rRNA + S-adenosyl-L-methionine = N(4)-methylcytidine(1402) in 16S rRNA + S-adenosyl-L-homocysteine + H(+). Functionally, specifically methylates the N4 position of cytidine in position 1402 (C1402) of 16S rRNA. This is Ribosomal RNA small subunit methyltransferase H from Campylobacter fetus subsp. fetus (strain 82-40).